We begin with the raw amino-acid sequence, 1362 residues long: MSAESGPGTRLRNLPVMGDGLETSQMSTTQAQAQPQPANAASTNPPPPETSNPNKPKRQTNQLQYLLRVVLKTLWKHQFAWPFQQPVDAVKLNLPDYYKIIKTPMDMGTIKKRLENNYYWNAQECIQDFNTMFTNCYIYNKPGDDIVLMAEALEKLFLQKINELPTEETEIMIVQAKGRGRGRKETGTAKPGVSTVPNTTQASTPPQTQTPQPNPPPVQATPHPFPAVTPDLIVQTPVMTVVPPQPLQTPPPVPPQPQPPPAPAPQPVQSHPPIIAATPQPVKTKKGVKRKADTTTPTTIDPIHEPPSLPPEPKTTKLGQRRESSRPVKPPKKDVPDSQQHPAPEKSSKVSEQLKCCSGILKEMFAKKHAAYAWPFYKPVDVEALGLHDYCDIIKHPMDMSTIKSKLEAREYRDAQEFGADVRLMFSNCYKYNPPDHEVVAMARKLQDVFEMRFAKMPDEPEEPVVAVSSPAVPPPTKVVAPPSSSDSSSDSSSDSDSSTDDSEEERAQRLAELQEQLKAVHEQLAALSQPQQNKPKKKEKDKKEKKKEKHKRKEEVEENKKSKAKEPPPKKTKKNNSSNSNVSKKEPAPMKSKPPPTYESEEEDKCKPMSYEEKRQLSLDINKLPGEKLGRVVHIIQSREPSLKNSNPDEIEIDFETLKPSTLRELERYVTSCLRKKRKPQAEKVDVIAGSSKMKGFSSSESESSSESSSSDSEDSETEMAPKSKKKGHPGREQKKHHHHHHQQMQQAPAPVPQQPPPPPQQPPPPPPPQQQQQPPPPPPPPSMPQQAAPAMKSSPPPFIATQVPVLEPQLPGSVFDPIGHFTQPILHLPQPELPPHLPQPPEHSTPPHLNQHAVVSPPALHNALPQQPSRPSNRAAALPPKPARPPAVSPALTQTPLLPQPPMAQPPQVLLEDEEPPAPPLTSMQMQLYLQQLQKVQPPTPLLPSVKVQSQPPPPLPPPPHPSVQQQLQQQPPPPPPPQPQPPPQQQHQPPPRPVHLQPMQFSTHIQQPPPPQGQQPPHPPPGQQPPPPQPAKPQQVIQHHHSPRHHKSDPYSTGHLREAPSPLMIHSPQMSQFQSLTHQSPPQQNVQPKKQELRAASVVQPQPLVVVKEEKIHSPIIRSEPFSPSLRPEPPKHPESIKAPVHLPQRPEMKPVDVGRPVIRPPEQNAPPPGAPDKDKQKQEPKTPVAPKKDLKIKNMGSWASLVQKHPTTPSSTAKSSSDSFEQFRRAAREKEEREKALKAQAEHAEKEKERLRQERMRSREDEDALEQARRAHEEARRRQEQQQQQRQEQQQQQQQQAAAVAAAATPQAQSSQPQSMLDQQRELARKREQERRRREAMAATIDMNFQSDLLSIFEENLF.

Residues 1 to 58 (MSAESGPGTRLRNLPVMGDGLETSQMSTTQAQAQPQPANAASTNPPPPETSNPNKPKR) are disordered. Residues 23-43 (TSQMSTTQAQAQPQPANAAST) show a composition bias toward low complexity. A Bromo 1 domain is found at 58 to 164 (RQTNQLQYLL…KLFLQKINEL (107 aa)). Lys-99 participates in a covalent cross-link: Glycyl lysine isopeptide (Lys-Gly) (interchain with G-Cter in SUMO2). 3 disordered regions span residues 174 to 229 (VQAK…PAVT), 242 to 352 (VPPQ…KVSE), and 463 to 615 (EPVV…YEEK). Residues 197 to 211 (PNTTQASTPPQTQTP) show a composition bias toward low complexity. Composition is skewed to pro residues over residues 212 to 227 (QPNP…PFPA) and 243 to 266 (PPQP…PAPQ). Basic and acidic residues predominate over residues 320 to 336 (QRRESSRPVKPPKKDVP). The 110-residue stretch at 348-457 (SKVSEQLKCC…DVFEMRFAKM (110 aa)) folds into the Bromo 2 domain. Ser-470 is modified (phosphoserine). The span at 478–497 (KVVAPPSSSDSSSDSSSDSD) shows a compositional bias: low complexity. Phosphoserine; by CK2 is present on residues Ser-484, Ser-488, Ser-492, Ser-494, Ser-498, Ser-499, and Ser-503. The tract at residues 484–503 (SSSDSSSDSSSDSDSSTDDS) is NPS region. A BID region region spans residues 524–579 (QLAALSQPQQNKPKKKEKDKKEKKKEKHKRKEEVEENKKSKAKEPPPKKTKKNNSS). Basic residues predominate over residues 535–553 (KPKKKEKDKKEKKKEKHKR). The span at 554 to 570 (KEEVEENKKSKAKEPPP) shows a compositional bias: basic and acidic residues. Lys-585 is covalently cross-linked (Glycyl lysine isopeptide (Lys-Gly) (interchain with G-Cter in SUMO2)). Residues 600–682 (ESEEEDKCKP…SCLRKKRKPQ (83 aa)) form the NET domain. Ser-601 bears the Phosphoserine mark. The segment covering 605 to 615 (DKCKPMSYEEK) has biased composition (basic and acidic residues). Glycyl lysine isopeptide (Lys-Gly) (interchain with G-Cter in SUMO2) cross-links involve residues Lys-645 and Lys-694. Residues 674–1100 (CLRKKRKPQA…PKKQELRAAS (427 aa)) are disordered. Low complexity predominate over residues 699 to 712 (SSSESESSSESSSS). A compositionally biased stretch (basic residues) spans 724–744 (KSKKKGHPGREQKKHHHHHHQ). Pro residues-rich tracts occupy residues 751–785 (APVP…PPSM), 833–846 (PELP…PEHS), and 881–890 (PPKPARPPAV). A compositionally biased stretch (low complexity) spans 926–936 (MQMQLYLQQLQ). Pro residues-rich tracts occupy residues 953-964 (QPPPPLPPPPHP), 973-996 (QPPP…PPRP), and 1010-1034 (QPPP…PQPA). The span at 1041–1050 (QHHHSPRHHK) shows a compositional bias: basic residues. Residues 1047-1362 (RHHKSDPYST…LLSIFEENLF (316 aa)) are C-terminal (CTD) region. Residue Lys-1050 forms a Glycyl lysine isopeptide (Lys-Gly) (interchain with G-Cter in SUMO2) linkage. The span at 1071-1091 (PQMSQFQSLTHQSPPQQNVQP) shows a compositional bias: polar residues. The residue at position 1111 (Lys-1111) is an N6-acetyllysine; alternate. Residue Lys-1111 forms a Glycyl lysine isopeptide (Lys-Gly) (interchain with G-Cter in SUMO1); alternate linkage. Lys-1111 is covalently cross-linked (Glycyl lysine isopeptide (Lys-Gly) (interchain with G-Cter in SUMO2); alternate). The interval 1116-1339 (HSPIIRSEPF…KREQERRRRE (224 aa)) is disordered. Phosphoserine is present on residues Ser-1117 and Ser-1126. The segment covering 1175–1196 (PDKDKQKQEPKTPVAPKKDLKI) has biased composition (basic and acidic residues). A Glycyl lysine isopeptide (Lys-Gly) (interchain with G-Cter in SUMO2) cross-link involves residue Lys-1197. A phosphoserine mark is found at Ser-1201 and Ser-1204. Residues 1211 to 1223 (TTPSSTAKSSSDS) are compositionally biased toward low complexity. Basic and acidic residues predominate over residues 1225–1284 (EQFRRAAREKEEREKALKAQAEHAEKEKERLRQERMRSREDEDALEQARRAHEEARRRQE). Residues 1285–1313 (QQQQQRQEQQQQQQQQAAAVAAAATPQAQ) show a composition bias toward low complexity. A compositionally biased stretch (basic and acidic residues) spans 1323–1339 (QQRELARKREQERRRRE).

The protein belongs to the BET family. Interacts with p53/TP53; the interaction is direct. Interacts (via CTD region) with CDK9 and CCNT1, acting as an associated component of P-TEFb complex. Interacts with RELA (when acetylated at 'Lys-310'). Interacts (via NET domain) with NSD3, CHD4, BICRA and ATAD5. The interaction with BICRA bridges BRD4 to the GBAF complex. Interacts (via NET domain) with JMJD6 (via JmjC and N-terminal domains); the interaction is stronger in presence of ssRNA and recruits JMJD6 on distal enhancers. Interacts with NSD3. Interacts with NIPBL. As to quaternary structure, interacts with SMC2. Interacts with NCAPD3. In terms of assembly, (Microbial infection) Interacts with bovine papillomavirus type 1 regulatory protein E2. This interactions may serve for the tethering of viral genomes to host mitotic chromosomes allowing successful partitioning of the viral genome during cell division. (Microbial infection) Interacts with Epstein-Barr virus (EBV) protein EBNA1; this interaction facilitates transcriptional activation by EBNA1. As to quaternary structure, (Microbial infection) Interacts with human herpes virus-8 (HHV-8) protein LANA. Post-translationally, phosphorylation by CK2 disrupt the intramolecular binding between the bromo domain 2 and the NPS region and promotes binding between the NPS and the BID regions, leading to activate the protein and promote binding to acetylated histones. In absence of phosphorylation, BRD4 does not localize to p53/TP53 target gene promoters, phosphorylation promoting recruitment to p53/TP53 target promoters. As to expression, ubiquitously expressed.

Its subcellular location is the nucleus. The protein localises to the chromosome. With respect to regulation, inhibited by JQ1, a thieno-triazolo-1,4-diazepine derivative, which specifically inhibits members of the BET family (BRD2, BRD3 and BRD4). The first bromo domain is inhibited by GSK778 (iBET-BD1), which specifically inhibits the first bromo domain of members of the BET family (BRD2, BRD3 and BRD4). The second bromo domain is inhibited by ABBV-744, which specifically inhibits the second bromo domain of members of the BET family (BRD2, BRD3 and BRD4). The second bromo domain is inhibited by GSK046 (iBET-BD2), which specifically inhibits the second bromo domain of members of the BET family (BRD2, BRD3 and BRD4). In terms of biological role, chromatin reader protein that recognizes and binds acetylated histones and plays a key role in transmission of epigenetic memory across cell divisions and transcription regulation. Remains associated with acetylated chromatin throughout the entire cell cycle and provides epigenetic memory for postmitotic G1 gene transcription by preserving acetylated chromatin status and maintaining high-order chromatin structure. During interphase, plays a key role in regulating the transcription of signal-inducible genes by associating with the P-TEFb complex and recruiting it to promoters. Also recruits P-TEFb complex to distal enhancers, so called anti-pause enhancers in collaboration with JMJD6. BRD4 and JMJD6 are required to form the transcriptionally active P-TEFb complex by displacing negative regulators such as HEXIM1 and 7SKsnRNA complex from P-TEFb, thereby transforming it into an active form that can then phosphorylate the C-terminal domain (CTD) of RNA polymerase II. Regulates differentiation of naive CD4(+) T-cells into T-helper Th17 by promoting recruitment of P-TEFb to promoters. Promotes phosphorylation of 'Ser-2' of the C-terminal domain (CTD) of RNA polymerase II. According to a report, directly acts as an atypical protein kinase and mediates phosphorylation of 'Ser-2' of the C-terminal domain (CTD) of RNA polymerase II; these data however need additional evidences in vivo. In addition to acetylated histones, also recognizes and binds acetylated RELA, leading to further recruitment of the P-TEFb complex and subsequent activation of NF-kappa-B. Also acts as a regulator of p53/TP53-mediated transcription: following phosphorylation by CK2, recruited to p53/TP53 specific target promoters. Acts as a chromatin insulator in the DNA damage response pathway. Inhibits DNA damage response signaling by recruiting the condensin-2 complex to acetylated histones, leading to chromatin structure remodeling, insulating the region from DNA damage response by limiting spreading of histone H2AX/H2A.x phosphorylation. This is Bromodomain-containing protein 4 (BRD4) from Homo sapiens (Human).